The chain runs to 430 residues: 3-phosphoshikimate 1-carboxyvinyltransferase (430 aa).

3-phosphoshikimate is bound by residues Lys20, Ser21, and Arg25. A phosphoenolpyruvate-binding site is contributed by Lys20. Residues Gly92 and Arg120 each contribute to the phosphoenolpyruvate site. 3-phosphoshikimate-binding residues include Ser166, Gln168, Asp312, and Lys339. Residue Gln168 participates in phosphoenolpyruvate binding. Catalysis depends on Asp312, which acts as the Proton acceptor. 2 residues coordinate phosphoenolpyruvate: Arg343 and Arg387.

Belongs to the EPSP synthase family. In terms of assembly, monomer.

The protein localises to the cytoplasm. The enzyme catalyses 3-phosphoshikimate + phosphoenolpyruvate = 5-O-(1-carboxyvinyl)-3-phosphoshikimate + phosphate. Its pathway is metabolic intermediate biosynthesis; chorismate biosynthesis; chorismate from D-erythrose 4-phosphate and phosphoenolpyruvate: step 6/7. Its function is as follows. Catalyzes the transfer of the enolpyruvyl moiety of phosphoenolpyruvate (PEP) to the 5-hydroxyl of shikimate-3-phosphate (S3P) to produce enolpyruvyl shikimate-3-phosphate and inorganic phosphate. The protein is 3-phosphoshikimate 1-carboxyvinyltransferase of Lactococcus lactis subsp. cremoris (strain MG1363).